A 265-amino-acid polypeptide reads, in one-letter code: Putative 2-aminoethylphosphonate transport system permease protein PhnV (265 aa).

6 consecutive transmembrane segments (helical) span residues 13–33 (GVVA…VILM), 69–89 (LTIG…AALA), 104–124 (VFYL…LVAF), 131–151 (MNGT…AFTF), 185–205 (LPLL…LSMG), and 233–253 (NIAD…LLMM). Residues 65-253 (LLASLTIGFC…LVAITLLLMM (189 aa)) enclose the ABC transmembrane type-1 domain.

Belongs to the binding-protein-dependent transport system permease family.

Its subcellular location is the cell inner membrane. Functionally, probably part of the PhnSTUV complex (TC 3.A.1.11.5) involved in 2-aminoethylphosphonate import. Probably responsible for the translocation of the substrate across the membrane. In Salmonella typhimurium (strain LT2 / SGSC1412 / ATCC 700720), this protein is Putative 2-aminoethylphosphonate transport system permease protein PhnV (phnV).